Reading from the N-terminus, the 274-residue chain is Large ribosomal subunit protein uL2 (274 aa).

Residues 195–274 (VGNSDHGLES…SKYIIERRKK (80 aa)) form a disordered region. Composition is skewed to basic residues over residues 209 to 220 (GRSRWQGRRPRN) and 244 to 264 (PRSR…KKQS).

It belongs to the universal ribosomal protein uL2 family. As to quaternary structure, part of the 50S ribosomal subunit. Forms a bridge to the 30S subunit in the 70S ribosome.

One of the primary rRNA binding proteins. Required for association of the 30S and 50S subunits to form the 70S ribosome, for tRNA binding and peptide bond formation. It has been suggested to have peptidyltransferase activity; this is somewhat controversial. Makes several contacts with the 16S rRNA in the 70S ribosome. In Bacteroides fragilis (strain ATCC 25285 / DSM 2151 / CCUG 4856 / JCM 11019 / LMG 10263 / NCTC 9343 / Onslow / VPI 2553 / EN-2), this protein is Large ribosomal subunit protein uL2.